The sequence spans 251 residues: Uridylate kinase (251 aa).

Residue 24–27 (KISG) participates in ATP binding. Residues 32–37 (GDQGFG) form an involved in allosteric activation by GTP region. Gly-66 contributes to the UMP binding site. ATP is bound by residues Gly-67 and Arg-71. Residues Asp-86 and 147–154 (TGNPYFTT) each bind UMP. The ATP site is built by Asn-175, Tyr-181, and Asp-184.

It belongs to the UMP kinase family. As to quaternary structure, homohexamer.

The protein resides in the cytoplasm. It catalyses the reaction UMP + ATP = UDP + ADP. It participates in pyrimidine metabolism; CTP biosynthesis via de novo pathway; UDP from UMP (UMPK route): step 1/1. Allosterically activated by GTP. Inhibited by UTP. Functionally, catalyzes the reversible phosphorylation of UMP to UDP. In Ruegeria pomeroyi (strain ATCC 700808 / DSM 15171 / DSS-3) (Silicibacter pomeroyi), this protein is Uridylate kinase.